The chain runs to 194 residues: NADH-quinone oxidoreductase subunit B (194 aa).

[4Fe-4S] cluster is bound by residues cysteine 73, cysteine 74, cysteine 138, and cysteine 168.

This sequence belongs to the complex I 20 kDa subunit family. As to quaternary structure, NDH-1 is composed of 14 different subunits. Subunits NuoB, C, D, E, F, and G constitute the peripheral sector of the complex. It depends on [4Fe-4S] cluster as a cofactor.

It is found in the cell inner membrane. It carries out the reaction a quinone + NADH + 5 H(+)(in) = a quinol + NAD(+) + 4 H(+)(out). NDH-1 shuttles electrons from NADH, via FMN and iron-sulfur (Fe-S) centers, to quinones in the respiratory chain. The immediate electron acceptor for the enzyme in this species is believed to be ubiquinone. Couples the redox reaction to proton translocation (for every two electrons transferred, four hydrogen ions are translocated across the cytoplasmic membrane), and thus conserves the redox energy in a proton gradient. The sequence is that of NADH-quinone oxidoreductase subunit B from Bradyrhizobium sp. (strain BTAi1 / ATCC BAA-1182).